The following is a 470-amino-acid chain: Nuclear receptor ROR-beta (470 aa).

A DNA-binding region (nuclear receptor) is located at residues 18–93; that stretch reads VIPCKICGDK…LGMSRDAVKF (76 aa). NR C4-type zinc fingers lie at residues 21 to 41 and 57 to 81; these read CKIC…CEGC and CPRQ…LQKC. A compositionally biased stretch (basic and acidic residues) spans 104–117; it reads LYAEVQKHQQRLQE. Residues 104 to 127 are disordered; the sequence is LYAEVQKHQQRLQEQRQQQSGEAE. The NR LBD domain maps to 222-460; it reads EIDRIAQNII…TLFPPLYKEL (239 aa). Residues 456-461 carry the AF-2 motif; that stretch reads LYKELF.

The protein belongs to the nuclear hormone receptor family. NR1 subfamily. Monomer. Interacts with CRX. In terms of tissue distribution, expressed in inner and outer neuroblastic layer as well as in the ganglion cell layer of the developing retina. Expressed in bone marrow osteoprogenitor cells.

The protein localises to the nucleus. The protein resides in the nucleoplasm. Functionally, nuclear receptor that binds DNA as a monomer to ROR response elements (RORE) containing a single core motif half-site 5'-AGGTCA-3' preceded by a short A-T-rich sequence. Considered to have intrinsic transcriptional activity, have some natural ligands such as all-trans retinoic acid (ATRA) and other retinoids which act as inverse agonists repressing the transcriptional activity. Required for normal postnatal development of rod and cone photoreceptor cells. Modulates rod photoreceptors differentiation at least by inducing the transcription factor NRL-mediated pathway. In cone photoreceptor cells, regulates transcription of OPN1SW. Involved in the regulation of the period length and stability of the circadian rhythm. May control cytoarchitectural patterning of neocortical neurons during development. May act in a dose-dependent manner to regulate barrel formation upon innervation of layer IV neurons by thalamocortical axons. May play a role in the suppression of osteoblastic differentiation through the inhibition of RUNX2 transcriptional activity. Its function is as follows. Isoform 1 is critical for hindlimb motor control and for the differentiation of amacrine and horizontal cells in the retina. Regulates the expression of PTF1A synergistically with FOXN4. The protein is Nuclear receptor ROR-beta (Rorb) of Mus musculus (Mouse).